The following is a 282-amino-acid chain: Probable endonuclease 4 (282 aa).

Positions 71, 111, 147, 181, 184, 218, 231, 233, and 263 each coordinate Zn(2+).

The protein belongs to the AP endonuclease 2 family. The cofactor is Zn(2+).

It carries out the reaction Endonucleolytic cleavage to 5'-phosphooligonucleotide end-products.. Its function is as follows. Endonuclease IV plays a role in DNA repair. It cleaves phosphodiester bonds at apurinic or apyrimidinic (AP) sites, generating a 3'-hydroxyl group and a 5'-terminal sugar phosphate. The chain is Probable endonuclease 4 from Protochlamydia amoebophila (strain UWE25).